The following is a 410-amino-acid chain: MPDDLINSFMTGPDENGRFGDFGGRFVSETLMPLILELERQYEFAKTDQAFWDEMHHLWTHYVGRPSPLYFAERLTERLGGAKVYLKRDELNHTGAHKINNVLGQIILARRMGKTRIIAETGAGQHGVATATVCAKFGLKCVVYMGAHDVERQAPNVFRMKLLGAEVVPVTSGRGTLKDAMNDALRDWVTNVRETFYCIGTVAGPHPYPAMVRDFQAIIGQEAREQMMEAEGRLPDTLIAAIGGGSNAMGLFYPFLDDKEVAIIGVEAGGKGVNEKMEHCASLTGGRPGVLHGNRTYLLQDDDGQILEGFSISAGLDYPGIGPEHAWLHDIGRAKYVSITDAEALDAFQLCCETEGIIPALEPSHALAHVAKIAPDLPRDHIICMNMCGRGDKDIFTVAKALGQDMSGAV.

The residue at position 98 (Lys98) is an N6-(pyridoxal phosphate)lysine.

It belongs to the TrpB family. As to quaternary structure, tetramer of two alpha and two beta chains. Pyridoxal 5'-phosphate is required as a cofactor.

The catalysed reaction is (1S,2R)-1-C-(indol-3-yl)glycerol 3-phosphate + L-serine = D-glyceraldehyde 3-phosphate + L-tryptophan + H2O. Its pathway is amino-acid biosynthesis; L-tryptophan biosynthesis; L-tryptophan from chorismate: step 5/5. In terms of biological role, the beta subunit is responsible for the synthesis of L-tryptophan from indole and L-serine. The polypeptide is Tryptophan synthase beta chain (Dinoroseobacter shibae (strain DSM 16493 / NCIMB 14021 / DFL 12)).